The primary structure comprises 212 residues: Translation initiation factor IF-3 (212 aa).

The protein belongs to the IF-3 family. Monomer.

It localises to the cytoplasm. Its function is as follows. IF-3 binds to the 30S ribosomal subunit and shifts the equilibrium between 70S ribosomes and their 50S and 30S subunits in favor of the free subunits, thus enhancing the availability of 30S subunits on which protein synthesis initiation begins. The sequence is that of Translation initiation factor IF-3 from Synechococcus sp. (strain CC9311).